We begin with the raw amino-acid sequence, 230 residues long: Large ribosomal subunit protein uL1 (230 aa).

The protein belongs to the universal ribosomal protein uL1 family. As to quaternary structure, part of the 50S ribosomal subunit.

Functionally, binds directly to 23S rRNA. The L1 stalk is quite mobile in the ribosome, and is involved in E site tRNA release. Its function is as follows. Protein L1 is also a translational repressor protein, it controls the translation of the L11 operon by binding to its mRNA. The chain is Large ribosomal subunit protein uL1 from Nitrosomonas europaea (strain ATCC 19718 / CIP 103999 / KCTC 2705 / NBRC 14298).